The primary structure comprises 125 residues: Large ribosomal subunit protein bL12 (125 aa).

Belongs to the bacterial ribosomal protein bL12 family. Homodimer. Part of the ribosomal stalk of the 50S ribosomal subunit. Forms a multimeric L10(L12)X complex, where L10 forms an elongated spine to which 2 to 4 L12 dimers bind in a sequential fashion. Binds GTP-bound translation factors.

Functionally, forms part of the ribosomal stalk which helps the ribosome interact with GTP-bound translation factors. Is thus essential for accurate translation. The chain is Large ribosomal subunit protein bL12 from Delftia acidovorans (strain DSM 14801 / SPH-1).